We begin with the raw amino-acid sequence, 517 residues long: Mitochondrial division protein fszA (517 aa).

GTP is bound by residues 60 to 64 (GGGCN), 147 to 149 (GTG), Glu-178, Arg-182, and Asp-225. Positions 496-517 (FTNGNNNKPYNNNKNTPGSNYE) are disordered. Over residues 497–517 (TNGNNNKPYNNNKNTPGSNYE) the composition is skewed to low complexity.

This sequence belongs to the FtsZ family.

The protein resides in the mitochondrion matrix. Probably involved in mitochondrion division process. When overexpressed, induces mitochondrial tubule formation. Binds to and hydrolyzes GTP. This chain is Mitochondrial division protein fszA (fszA), found in Dictyostelium discoideum (Social amoeba).